Here is a 208-residue protein sequence, read N- to C-terminus: Putative chemokine-related protein FP248 (208 aa).

The N-terminal stretch at 1-23 is a signal peptide; it reads MGTGGSLLCGCSLVLSCLCPSAS. An N-linked (GlcNAc...) asparagine glycan is attached at N29.

It is found in the secreted. The sequence is that of Putative chemokine-related protein FP248 from Homo sapiens (Human).